The sequence spans 85 residues: UPF0335 protein BARBAKC583_0130 (85 aa).

The protein belongs to the UPF0335 family.

This chain is UPF0335 protein BARBAKC583_0130, found in Bartonella bacilliformis (strain ATCC 35685 / KC583 / Herrer 020/F12,63).